The following is a 179-amino-acid chain: ATP synthase subunit delta (179 aa).

Belongs to the ATPase delta chain family. F-type ATPases have 2 components, F(1) - the catalytic core - and F(0) - the membrane proton channel. F(1) has five subunits: alpha(3), beta(3), gamma(1), delta(1), epsilon(1). F(0) has three main subunits: a(1), b(2) and c(10-14). The alpha and beta chains form an alternating ring which encloses part of the gamma chain. F(1) is attached to F(0) by a central stalk formed by the gamma and epsilon chains, while a peripheral stalk is formed by the delta and b chains.

The protein localises to the cell inner membrane. In terms of biological role, f(1)F(0) ATP synthase produces ATP from ADP in the presence of a proton or sodium gradient. F-type ATPases consist of two structural domains, F(1) containing the extramembraneous catalytic core and F(0) containing the membrane proton channel, linked together by a central stalk and a peripheral stalk. During catalysis, ATP synthesis in the catalytic domain of F(1) is coupled via a rotary mechanism of the central stalk subunits to proton translocation. Its function is as follows. This protein is part of the stalk that links CF(0) to CF(1). It either transmits conformational changes from CF(0) to CF(1) or is implicated in proton conduction. The sequence is that of ATP synthase subunit delta from Burkholderia multivorans (strain ATCC 17616 / 249).